The primary structure comprises 371 residues: Fe(3+) ions import ATP-binding protein FbpC (371 aa).

In terms of domain architecture, ABC transporter spans 5–235 (IKIENAQKRY…PANLFVATFI (231 aa)). ATP is bound at residue 37-44 (GPSGCGKT).

It belongs to the ABC transporter superfamily. Fe(3+) ion importer (TC 3.A.1.10) family. As to quaternary structure, the complex is composed of two ATP-binding proteins (FbpC), two transmembrane proteins (FbpB) and a solute-binding protein (FbpA).

It localises to the cell inner membrane. The enzyme catalyses Fe(3+)(out) + ATP + H2O = Fe(3+)(in) + ADP + phosphate + H(+). Functionally, part of the ABC transporter complex FbpABC involved in Fe(3+) ions import. Responsible for energy coupling to the transport system. The chain is Fe(3+) ions import ATP-binding protein FbpC from Fusobacterium nucleatum subsp. nucleatum (strain ATCC 25586 / DSM 15643 / BCRC 10681 / CIP 101130 / JCM 8532 / KCTC 2640 / LMG 13131 / VPI 4355).